We begin with the raw amino-acid sequence, 158 residues long: Lectin-like protein EP153R (158 aa).

The Cytoplasmic segment spans residues 1–26 (MFLNKKYPSLIEKKMDDLMTLKFCYL). Residues 27 to 47 (IITFLIITNIFSLAINIWGGG) form a helical membrane-spanning segment. Over 48–158 (DMIDRQSCEN…YTETFFICSN (111 aa)) the chain is Extracellular. An intrachain disulfide couples Cys61 to Cys72. The lectin-like stretch occupies residues 61–157 (CPKDWVGYNN…KYTETFFICS (97 aa)). N-linked (GlcNAc...) asparagine; by host glycans are attached at residues Asn81, Asn94, Asn100, Asn106, Asn112, Asn119, and Asn139.

It belongs to the asfivirus lectin-like protein family. Homodimer.

Its subcellular location is the host endoplasmic reticulum membrane. Down-regulates MHC-I expression by impairing the appropriate configuration or presentation into the plasma membrane of the latter. Participates in viral hemadsorption, which may help viral spread. Reduces the transactivating activity of host TP53, thus inhibiting apoptosis. Non-essential for virus growth in swine macrophage cell cultures. This is Lectin-like protein EP153R from African swine fever virus (isolate Pig/Kenya/KEN-50/1950) (ASFV).